A 66-amino-acid polypeptide reads, in one-letter code: Large ribosomal subunit protein bL35 (66 aa).

Over residues 1 to 26 the composition is skewed to basic residues; that stretch reads MPKMKTHRGSAKRFKKTGSGKLKRSH. Positions 1 to 48 are disordered; it reads MPKMKTHRGSAKRFKKTGSGKLKRSHAYTSHLFANKSQKQKRKLRKSA.

This sequence belongs to the bacterial ribosomal protein bL35 family. Part of the 50S ribosomal subunit.

The polypeptide is Large ribosomal subunit protein bL35 (Bacillus subtilis (strain 168)).